The following is a 118-amino-acid chain: Large ribosomal subunit protein bL20 (118 aa).

This sequence belongs to the bacterial ribosomal protein bL20 family.

Functionally, binds directly to 23S ribosomal RNA and is necessary for the in vitro assembly process of the 50S ribosomal subunit. It is not involved in the protein synthesizing functions of that subunit. The protein is Large ribosomal subunit protein bL20 of Hahella chejuensis (strain KCTC 2396).